The chain runs to 114 residues: Probable 4-amino-4-deoxy-L-arabinose-phosphoundecaprenol flippase subunit ArnE (114 aa).

3 helical membrane-spanning segments follow: residues 38–58 (LTLRWLAIAVVSLGLGMLLWL), 64–84 (LPLSVAYPMLSFNFVLVTLAA), and 94–114 (LRHWLGVAAIMFGILLMSWHL). The region spanning 43–112 (LAIAVVSLGL…IMFGILLMSW (70 aa)) is the EamA domain.

It belongs to the ArnE family. In terms of assembly, heterodimer of ArnE and ArnF.

It localises to the cell inner membrane. Its pathway is bacterial outer membrane biogenesis; lipopolysaccharide biosynthesis. Its function is as follows. Translocates 4-amino-4-deoxy-L-arabinose-phosphoundecaprenol (alpha-L-Ara4N-phosphoundecaprenol) from the cytoplasmic to the periplasmic side of the inner membrane. The sequence is that of Probable 4-amino-4-deoxy-L-arabinose-phosphoundecaprenol flippase subunit ArnE from Yersinia pseudotuberculosis serotype O:3 (strain YPIII).